We begin with the raw amino-acid sequence, 757 residues long: Tyrosine-protein kinase HTK16 (757 aa).

The region spanning 10–102 is the SH2 1 domain; sequence WYHGKITREV…GLPCKLVDFC (93 aa). ANK repeat units lie at residues 115–147, 151–180, 184–214, 219–248, and 252–281; these read GLDT…NVNA, SGLT…DASA, NGRT…DFLK, NGWV…SMYP, and DGDT…NQPK. An SH2 2 domain is found at 287 to 379; the sequence is WLHQNLDRNG…GLPTLLQFPV (93 aa). Disordered stretches follow at residues 381 to 407 and 444 to 467; these read SAEN…PSRP and PKLP…QKGD. Positions 455–467 are enriched in polar residues; it reads EVPNSVNVGQKGD. The Protein kinase domain maps to 484–740; the sequence is ISFGKELGVG…PTFNELHSTF (257 aa). Residues 490-498 and Lys-516 each bind ATP; that span reads LGVGEFGSV. Catalysis depends on Asp-608, which acts as the Proton acceptor. Tyr-746 carries the phosphotyrosine modification.

It belongs to the protein kinase superfamily. Tyr protein kinase family. In terms of tissue distribution, epithelial cells.

It carries out the reaction L-tyrosyl-[protein] + ATP = O-phospho-L-tyrosyl-[protein] + ADP + H(+). Its function is as follows. May be involved in signal transduction. The protein is Tyrosine-protein kinase HTK16 (HTK16) of Hydra vulgaris (Hydra).